We begin with the raw amino-acid sequence, 344 residues long: MSESEAEETKISTEPVDNAWAMKIPTFRQEDNPHGVVEESSFATLFPKYRERYLKEVWPLVEQCLSEHHLKAELDLMEGSMVVKTSRKTWDPYIIIKARDMIKLMARSVPFEQAKRVLQDDIGCDIIKIGNLVHKKEKFVKRRQRLIGPNGATLKSIELLTDCYVLVQGNTVSALGPYKGLQQVRDIVLETMNNVHPIYNIKALMIKRELMKDPRLANEDWSRFLPKFKNKNISKRKQPKVKKQKKEYTPFPPSQPESKVDKQLASGEYFLNQEQKQAKRNQGRTEKQKEAAKRQDERRNKDFVPPTEESAASSRKKEDGSSTKVDVKALKAKLIKANKKAKSS.

The KH domain maps to Asp125–Asn193. The segment covering Asn232 to Lys245 has biased composition (basic residues). Disordered regions lie at residues Asn232–Val260 and Gln273–Asp326. A coiled-coil region spans residues Phe270–Gln295. Composition is skewed to basic and acidic residues over residues Gly283 to Asp302 and Arg315 to Asp326.

This sequence belongs to the KRR1 family. In terms of assembly, monomer. Component of the ribosomal small subunit (SSU) processome.

It is found in the nucleus. The protein resides in the nucleolus. Required for 40S ribosome biogenesis. Involved in nucleolar processing of pre-18S ribosomal RNA and ribosome assembly. Binds to RNA. Required for female germline development, cell viability during eye development and for survival of dividing cells and epithelial cells during early wing disk development. This chain is KRR1 small subunit processome component homolog, found in Drosophila yakuba (Fruit fly).